Consider the following 242-residue polypeptide: Probable 2-phosphosulfolactate phosphatase (242 aa).

The protein belongs to the ComB family. It depends on Mg(2+) as a cofactor.

It carries out the reaction (2R)-O-phospho-3-sulfolactate + H2O = (2R)-3-sulfolactate + phosphate. This is Probable 2-phosphosulfolactate phosphatase from Prochlorococcus marinus (strain NATL1A).